The primary structure comprises 157 residues: Transcription elongation factor GreA (157 aa).

It belongs to the GreA/GreB family.

Its function is as follows. Necessary for efficient RNA polymerase transcription elongation past template-encoded arresting sites. The arresting sites in DNA have the property of trapping a certain fraction of elongating RNA polymerases that pass through, resulting in locked ternary complexes. Cleavage of the nascent transcript by cleavage factors such as GreA or GreB allows the resumption of elongation from the new 3'terminus. GreA releases sequences of 2 to 3 nucleotides. This is Transcription elongation factor GreA from Chelativorans sp. (strain BNC1).